The following is a 255-amino-acid chain: H-2 class II histocompatibility antigen, E-K alpha chain (255 aa).

The N-terminal stretch at 1 to 25 is a signal peptide; it reads MATIGALVLRFFFIAVLMSSQKSWA. The alpha-1 stretch occupies residues 26 to 109; sequence IKEEHTIIQA…ERSNNTPDAN (84 aa). Topologically, residues 26–216 are extracellular; it reads IKEEHTIIQA…EKTLLPETKE (191 aa). The tract at residues 110–203 is alpha-2; that stretch reads VAPEVTVLSR…GLEEPLRKHW (94 aa). An Ig-like C1-type domain is found at 112–204; it reads PEVTVLSRSP…LEEPLRKHWE (93 aa). The cysteines at positions 132 and 188 are disulfide-linked. Asn143 carries an N-linked (GlcNAc...) asparagine glycan. The interval 204 to 216 is connecting peptide; it reads EFEEKTLLPETKE. Residues 217–242 traverse the membrane as a helical segment; sequence NVVCALGLFVGLVGIVVGIILIMKGI. Topologically, residues 243 to 255 are cytoplasmic; the sequence is KKRNVVERRQGAL.

The protein belongs to the MHC class II family.

The protein localises to the membrane. The chain is H-2 class II histocompatibility antigen, E-K alpha chain from Mus musculus (Mouse).